Here is a 107-residue protein sequence, read N- to C-terminus: Thioredoxin 1 (107 aa).

The region spanning 2-107 is the Thioredoxin domain; the sequence is SVAAAVTDAT…TLANTLDKHL (106 aa). Residues Cys-32 and Cys-35 are joined by a disulfide bond.

This sequence belongs to the thioredoxin family.

Its function is as follows. Participates in various redox reactions through the reversible oxidation of its active center dithiol to a disulfide and catalyzes dithiol-disulfide exchange reactions. The chain is Thioredoxin 1 (trxA) from Synechococcus elongatus (strain ATCC 33912 / PCC 7942 / FACHB-805) (Anacystis nidulans R2).